The chain runs to 43 residues: Protein PsbN (43 aa).

Residues 5 to 27 (TLVAIFISCSLVSFTGYALYTAF) traverse the membrane as a helical segment.

This sequence belongs to the PsbN family.

It localises to the plastid. The protein localises to the chloroplast thylakoid membrane. May play a role in photosystem I and II biogenesis. This chain is Protein PsbN, found in Exsertotheca crispa (Moss).